The following is a 622-amino-acid chain: Probable ATP-citrate synthase (622 aa).

Residues Ala-228–Gly-248 and Phe-279–Ala-305 contribute to the ATP site. Glu-245 contacts Mg(2+). Residue His-287 is the Tele-phosphohistidine intermediate of the active site. Position 306–316 (Leu-306–Ser-316) interacts with CoA.

The protein in the N-terminal section; belongs to the succinate/malate CoA ligase beta subunit family. This sequence in the C-terminal section; belongs to the succinate/malate CoA ligase alpha subunit family. In terms of assembly, homotetramer.

The protein localises to the cytoplasm. It catalyses the reaction oxaloacetate + acetyl-CoA + ADP + phosphate = citrate + ATP + CoA. Catalyzes the cleavage of citrate into oxaloacetate and acetyl-CoA, the latter serving as common substrate in multiple biochemical reactions in protein, carbohydrate and lipid metabolism. The chain is Probable ATP-citrate synthase (acly) from Dictyostelium discoideum (Social amoeba).